Here is a 397-residue protein sequence, read N- to C-terminus: Serpin B10 (397 aa).

A disulfide bridge connects residues C68 and C395. Positions 74–77 (KKRK) match the Nuclear localization signal motif.

Belongs to the serpin family. Ov-serpin subfamily. As to expression, expressed specifically in myeloid cells and the bone marrow.

The protein resides in the nucleus. Its subcellular location is the cytoplasm. In terms of biological role, protease inhibitor that may play a role in the regulation of protease activities during hematopoiesis and apoptosis induced by TNF. May regulate protease activities in the cytoplasm and in the nucleus. This chain is Serpin B10 (SERPINB10), found in Homo sapiens (Human).